The primary structure comprises 641 residues: Protein GAMETE EXPRESSED 3 (641 aa).

The signal sequence occupies residues 1-29 (MVAFRFVYIPLPFFFFFFFFFVFFSGVSQ). The helical transmembrane segment at 441–461 (IIWFLLFEFVIMVLFAALVRF) threads the bilayer. A disordered region spans residues 570–627 (ITIFQTPSDESSSEESYRDEHYDDVADDEHDEDDLDRKQKGKLLAHSEGSSNDGDGIA). Positions 584-593 (ESYRDEHYDD) are enriched in basic and acidic residues. Over residues 594–603 (VADDEHDEDD) the composition is skewed to acidic residues.

As to expression, expressed in mature siliques and in pollen, mainly in the sperm cells. Detected in the egg cell within the female gametophyte.

The protein localises to the cell membrane. Functionally, required for micropylar pollen tube guidance. Plays a role during early embryo patterning. The chain is Protein GAMETE EXPRESSED 3 (GEX3) from Arabidopsis thaliana (Mouse-ear cress).